Consider the following 68-residue polypeptide: Protease A inhibitor 3 (68 aa).

An N-acetylmethionine modification is found at methionine 1. Residues 1–14 (MNTDQQKVSEIFQS) show a composition bias toward polar residues. Disordered regions lie at residues 1-21 (MNTD…KLQG) and 33-68 (MASQ…HKKE). The inhibitory domain stretch occupies residues 1–32 (MNTDQQKVSEIFQSSKEKLQGDAKVVSDAFKK). Basic and acidic residues predominate over residues 33 to 53 (MASQDKDGKTTDADESEKHNY).

The protein belongs to the protease inhibitor I34 family.

Its function is as follows. Specific and potent inhibitor for yeast aspartic protease A (yscA). The proteinase acts as a folding template stabilizing the helical conformation in the inhibitor, which results in the potent and specific blockage of the proteolytic activity. This Saccharomyces cerevisiae (strain ATCC 204508 / S288c) (Baker's yeast) protein is Protease A inhibitor 3 (PAI3).